A 526-amino-acid polypeptide reads, in one-letter code: Peptide chain release factor 3 (526 aa).

One can recognise a tr-type G domain in the interval 9–277; that stretch reads NKRRTFAIIS…DFVEYAPGPQ (269 aa). GTP is bound by residues 18–25, 86–90, and 140–143; these read SHPDAGKT, DTPGH, and NKLD.

Belongs to the TRAFAC class translation factor GTPase superfamily. Classic translation factor GTPase family. PrfC subfamily.

The protein localises to the cytoplasm. Its function is as follows. Increases the formation of ribosomal termination complexes and stimulates activities of RF-1 and RF-2. It binds guanine nucleotides and has strong preference for UGA stop codons. It may interact directly with the ribosome. The stimulation of RF-1 and RF-2 is significantly reduced by GTP and GDP, but not by GMP. This Legionella pneumophila (strain Paris) protein is Peptide chain release factor 3.